A 214-amino-acid chain; its full sequence is Putative F-box protein At3g58910 (214 aa).

The 47-residue stretch at 1–47 (MDRVSSLPDELLCHILSFLTTKETALTSLLSKREIIPLIKSVVFPTL) folds into the F-box domain.

The polypeptide is Putative F-box protein At3g58910 (Arabidopsis thaliana (Mouse-ear cress)).